A 327-amino-acid polypeptide reads, in one-letter code: Zinc transport protein ZntB (327 aa).

Over 1–273 (MEGIKGSEVN…SRRTYTMSLM (273 aa)) the chain is Cytoplasmic. A helical transmembrane segment spans residues 274 to 294 (AMVFLPSTFLTGLFGVNLGGI). Topologically, residues 295-300 (PGGGYQ) are periplasmic. A helical membrane pass occupies residues 301-321 (FGFSAFCIMLVVLIGGVAWWL). The Cytoplasmic portion of the chain corresponds to 322 to 327 (HRSKWL).

The protein belongs to the CorA metal ion transporter (MIT) (TC 1.A.35) family.

The protein resides in the cell inner membrane. It catalyses the reaction Zn(2+)(out) + H(+)(out) = Zn(2+)(in) + H(+)(in). In terms of biological role, zinc transporter. Acts as a Zn(2+):proton symporter, which likely mediates zinc ion uptake. The sequence is that of Zinc transport protein ZntB from Enterobacter sp. (strain 638).